We begin with the raw amino-acid sequence, 228 residues long: Cytochrome c oxidase subunit 2 (228 aa).

Residues 1–26 (MATWANLGLQNSSSPLMEQLNFFHDH) lie on the Mitochondrial intermembrane side of the membrane. The chain crosses the membrane as a helical span at residues 27-48 (TLLILIMITVMIAYIMFMLFFN). Residues 49–62 (KFTNRYLLHGQTIE) lie on the Mitochondrial matrix side of the membrane. Residues 63-82 (IIWTILPAIILMFIAFPSLR) traverse the membrane as a helical segment. The Mitochondrial intermembrane portion of the chain corresponds to 83 to 228 (LLYLMDEINS…FIKWISSQMN (146 aa)). Residues His161, Cys196, Glu198, Cys200, His204, and Met207 each coordinate Cu cation. Glu198 provides a ligand contact to Mg(2+).

This sequence belongs to the cytochrome c oxidase subunit 2 family. In terms of assembly, component of the cytochrome c oxidase (complex IV, CIV), a multisubunit enzyme composed of a catalytic core of 3 subunits and several supernumerary subunits. The complex exists as a monomer or a dimer and forms supercomplexes (SCs) in the inner mitochondrial membrane with ubiquinol-cytochrome c oxidoreductase (cytochrome b-c1 complex, complex III, CIII). Cu cation serves as cofactor.

The protein localises to the mitochondrion inner membrane. The enzyme catalyses 4 Fe(II)-[cytochrome c] + O2 + 8 H(+)(in) = 4 Fe(III)-[cytochrome c] + 2 H2O + 4 H(+)(out). In terms of biological role, component of the cytochrome c oxidase, the last enzyme in the mitochondrial electron transport chain which drives oxidative phosphorylation. The respiratory chain contains 3 multisubunit complexes succinate dehydrogenase (complex II, CII), ubiquinol-cytochrome c oxidoreductase (cytochrome b-c1 complex, complex III, CIII) and cytochrome c oxidase (complex IV, CIV), that cooperate to transfer electrons derived from NADH and succinate to molecular oxygen, creating an electrochemical gradient over the inner membrane that drives transmembrane transport and the ATP synthase. Cytochrome c oxidase is the component of the respiratory chain that catalyzes the reduction of oxygen to water. Electrons originating from reduced cytochrome c in the intermembrane space (IMS) are transferred via the dinuclear copper A center (CU(A)) of subunit 2 and heme A of subunit 1 to the active site in subunit 1, a binuclear center (BNC) formed by heme A3 and copper B (CU(B)). The BNC reduces molecular oxygen to 2 water molecules using 4 electrons from cytochrome c in the IMS and 4 protons from the mitochondrial matrix. The chain is Cytochrome c oxidase subunit 2 (COII) from Aedes aegypti (Yellowfever mosquito).